The sequence spans 923 residues: TBC1 domain family member 2A (923 aa).

Residue Met1 is modified to N-acetylmethionine. The interval 1-39 (MDGAHENAAESSSSVPRSEEPACSAGGPEVLPPEESEGC) is disordered. Residues 1 to 171 (MDGAHENAAE…AGNGPTLRLE (171 aa)) form an interaction with CADH1 region. Positions 47-144 (PKKLCGYLSK…WLQQLQTKRW (98 aa)) constitute a PH domain. 2 disordered regions span residues 146 to 166 (FHSS…GNGP) and 232 to 289 (RQAQ…LIQK). The tract at residues 301–439 (AEGLTRTRTA…KVTWDFTHPP (139 aa)) is interaction with RAC1. Residues 308 to 486 (RTAQEKILAL…LNSEIHQVTK (179 aa)) are a coiled coil. Residues 631-823 (GVPREHRPRV…RVWDAFLYEG (193 aa)) form the Rab-GAP TBC domain. Residues 870-904 (MKQLRQLRRAHRERLEAELHELEQLKAEYLETQSS) adopt a coiled-coil conformation. Residues 900 to 923 (ETQSSRGPAVPDGCTSEDEGEGEA) form a disordered region. The segment covering 914–923 (TSEDEGEGEA) has biased composition (acidic residues). Position 915 is a phosphoserine (Ser915).

Interacts with activated RAC1 and CDH1.

The protein resides in the cytoplasm. It localises to the cytoplasmic vesicle. The protein localises to the cell junction. In terms of biological role, acts as a GTPase-activating protein for RAB7A. Signal effector acting as a linker between RAC1 and RAB7A, leading to RAB7A inactivation and subsequent inhibition of cadherin degradation and reduced cell-cell adhesion. This is TBC1 domain family member 2A (TBC1D2) from Ailuropoda melanoleuca (Giant panda).